Reading from the N-terminus, the 124-residue chain is V-type proton ATPase subunit F 1 (124 aa).

Ser-87 is modified (phosphoserine).

It belongs to the V-ATPase F subunit family. V-ATPase is a heteromultimeric enzyme made up of two complexes: the ATP-hydrolytic V1 complex and the proton translocation V0 complex. The V1 complex consists of three catalytic AB heterodimers that form a heterohexamer, three peripheral stalks each consisting of EG heterodimers, one central rotor including subunits D and F, and the regulatory subunits C and H. The proton translocation complex V0 consists of the proton transport subunit a, a ring of proteolipid subunits c9c'', rotary subunit d, subunits e and f, and the accessory subunits VhaAC45 and ATP6AP2.

Functionally, subunit of the V1 complex of vacuolar(H+)-ATPase (V-ATPase), a multisubunit enzyme composed of a peripheral complex (V1) that hydrolyzes ATP and a membrane integral complex (V0) that translocates protons. V-ATPase is responsible for acidifying and maintaining the pH of intracellular compartments and in some cell types, is targeted to the plasma membrane, where it is responsible for acidifying the extracellular environment. This chain is V-type proton ATPase subunit F 1 (Vha14-1), found in Drosophila melanogaster (Fruit fly).